The following is a 277-amino-acid chain: Protein HEAT-INDUCED TAS1 TARGET 1 (277 aa).

Belongs to the heat induced plant HTT protein family. In terms of assembly, interacts with the heat shock proteins HSP70-14 and At2g33735/HSP40, and with NFYC2 in both cytoplasm and nucleus. In terms of tissue distribution, expressed ubiquitously, including in seedlings, leaves, stems, inflorescences and siliques.

It localises to the cytoplasm. The protein localises to the nucleus. Mediates both basal and acquired thermotolerance via HSFA1s-directed pathways (e.g. HSFA1A, HSFA1B, and HSFA1D). Triggers the expression of HSFA1A and HSFA1B. The sequence is that of Protein HEAT-INDUCED TAS1 TARGET 1 from Arabidopsis thaliana (Mouse-ear cress).